Here is a 684-residue protein sequence, read N- to C-terminus: Divalent metal transporter 1 (684 aa).

Topologically, residues 1 to 228 are cytoplasmic; it reads MEKDFTERST…YRNKLSLYNK (228 aa). The interval 153–195 is disordered; that stretch reads NKRNNNNNNNNNNNNNNNNNNNNNNNNNNNNNNNNSNNVDNRK. Residues 156–191 show a composition bias toward low complexity; that stretch reads NNNNNNNNNNNNNNNNNNNNNNNNNNNNNNNNSNNV. Residues 229–247 form a helical membrane-spanning segment; sequence LRMCFNYFGPGWIVAIAYL. Residues 248–275 are Vacuolar-facing; that stretch reads DPGNLCSNLNVGLIRSPDPTLEKDYSGY. The helical transmembrane segment at 276 to 299 threads the bilayer; sequence YLLWIMVYGHMLGFIFQVLSMRLG. The Cytoplasmic segment spans residues 300-319; sequence HVTGLDLASLCSKEFDRTTS. Residues 320-345 traverse the membrane as a helical segment; the sequence is TIIYVLVQIAIWGAHIQAIIGTFIAL. The Vacuolar portion of the chain corresponds to 346–350; that stretch reads NLIFG. A helical membrane pass occupies residues 351-370; sequence ISVKVAIFYTLFEAIIYSFL. Residues 371–381 are Cytoplasmic-facing; the sequence is ENKSLGLLENV. A helical membrane pass occupies residues 382 to 404; sequence LSFLVGILAVSFFVNVFMTPINF. The Vacuolar portion of the chain corresponds to 405–423; that stretch reads KELAISILYPRIPKGKEID. The chain crosses the membrane as a helical span at residues 424 to 445; sequence ALALLGSIISAHIFYLHTNLTA. The Cytoplasmic portion of the chain corresponds to 446-465; that stretch reads KKKSVICNDLSLRRYNTLGT. Residues 466 to 487 traverse the membrane as a helical segment; it reads IESGGSLFLSCLTNCIIVLTFA. The Vacuolar portion of the chain corresponds to 488–515; sequence EVNLKSFERRDQYNLFTAYEVMRKSFGK. The helical transmembrane segment at 516–534 threads the bilayer; it reads ISMYIWSFGLLSSGNNSSF. Topologically, residues 535–554 are cytoplasmic; it reads MCEYASKSVVEGFLNKKINT. Residues 555–573 form a helical membrane-spanning segment; the sequence is FVRVFTFRLMLFSLLYMFL. Residues 574-584 lie on the Vacuolar side of the membrane; sequence TLNKYTLDQLT. Residues 585–603 traverse the membrane as a helical segment; the sequence is NFINVIQVLLLPMATIPLY. The Cytoplasmic portion of the chain corresponds to 604-622; the sequence is RFSIHENVLGEFRLKKFPK. Residues 623-645 form a helical membrane-spanning segment; it reads FAVFLIIIAIIISNVLLTFLDFV. The Vacuolar segment spans residues 646-650; sequence HKETS. The chain crosses the membrane as a helical span at residues 651–673; sequence LITIFFLVIFSFLYFGFIIYFFN. Residues 674–684 are Cytoplasmic-facing; sequence IPIKKNYIQRN.

Belongs to the NRAMP (TC 2.A.55) family.

Its subcellular location is the vacuole membrane. The catalysed reaction is Fe(2+)(in) = Fe(2+)(out). Its function is as follows. Iron transporter. Required for parasite development during the blood stages. Required for apicoplast biogenesis. Required for mitochondrial polarization. The sequence is that of Divalent metal transporter 1 from Plasmodium falciparum (isolate 3D7).